We begin with the raw amino-acid sequence, 1372 residues long: Serine protease pic autotransporter (1372 aa).

Positions 1 to 55 (MNKVYSLKYCPVTGGLIAVSELARRVIKKTCRRLTHILLAGIPAICLCYSQISQA) are cleaved as a signal peptide. In terms of domain architecture, Peptidase S6 spans 56–301 (GIVRSDIAYQ…NVIPTDYLNQ (246 aa)). Residues H127, D155, and S258 each act as charge relay system in the active site. The region spanning 1106-1372 (DTNGDAGAWA…AVNANFRYMF (267 aa)) is the Autotransporter domain.

Post-translationally, cleaved to release the mature protein from the outer membrane.

The protein resides in the periplasm. The protein localises to the secreted. It is found in the cell surface. Its subcellular location is the cell outer membrane. In terms of biological role, involved in intestinal colonization, displays in vitro mucinolytic activity, serum resistance, and hemagglutination. Important to penetrate the intestinal mucus layer. The chain is Serine protease pic autotransporter (pic) from Escherichia coli O44:H18 (strain 042 / EAEC).